The following is a 228-amino-acid chain: Somatolactin (228 aa).

Residues 1–24 (MFSIRMNKVLQGFVCLMLTHRIVG) form the signal peptide. 3 cysteine pairs are disulfide-bonded: cysteine 29–cysteine 38, cysteine 88–cysteine 200, and cysteine 217–cysteine 225. Asparagine 141 and asparagine 177 each carry an N-linked (GlcNAc...) asparagine glycan.

It belongs to the somatotropin/prolactin family.

The protein resides in the secreted. The polypeptide is Somatolactin (Anguilla anguilla (European freshwater eel)).